The chain runs to 474 residues: tRNA (guanine(37)-N(1))-methyltransferase (474 aa).

S-adenosyl-L-methionine-binding positions include histidine 234, 274–275, 303–304, and asparagine 345; these read DL and DA. A compositionally biased stretch (acidic residues) spans 452–464; that stretch reads EPEAQCESEEAEE. A disordered region spans residues 452-474; sequence EPEAQCESEEAEEPSSKRIKVDT. A compositionally biased stretch (basic and acidic residues) spans 465 to 474; sequence PSSKRIKVDT.

This sequence belongs to the class I-like SAM-binding methyltransferase superfamily. TRM5/TYW2 family. Monomer.

The protein localises to the mitochondrion matrix. Its subcellular location is the nucleus. It is found in the cytoplasm. The enzyme catalyses guanosine(37) in tRNA + S-adenosyl-L-methionine = N(1)-methylguanosine(37) in tRNA + S-adenosyl-L-homocysteine + H(+). Functionally, specifically methylates the N1 position of guanosine-37 in various cytoplasmic and mitochondrial tRNAs. Methylation is not dependent on the nature of the nucleoside 5' of the target nucleoside. This is the first step in the biosynthesis of wybutosine (yW), a modified base adjacent to the anticodon of tRNAs and required for accurate decoding. The polypeptide is tRNA (guanine(37)-N(1))-methyltransferase (Caenorhabditis elegans).